An 848-amino-acid chain; its full sequence is ATP-dependent Clp protease ATP-binding subunit ClpC1 (848 aa).

The region spanning 2 to 144 (FERFTDRARR…RQQVIQLLSG (143 aa)) is the Clp R domain. 2 repeat regions span residues 5-70 (FTDR…IGQG) and 80-144 (FTPR…LLSG). The interval 171–418 (LDQFGRNLTA…RMRIRRMTAP (248 aa)) is i. ATP is bound at residue 216-223 (GEPGVGKT). A UVR domain is found at 425–460 (DEKIAEARREKESAIDAQDFEKAASLRDREKTLVAQ). An II region spans residues 479–670 (VDDEQIAEVL…VLIFTSNLGT (192 aa)). 553-560 (GPSGVGKT) lines the ATP pocket. Residues 821 to 848 (TGTRKPPAEPDLAKAGAHSAGGPEPAAR) form a disordered region.

It belongs to the ClpA/ClpB family. ClpC subfamily.

In terms of biological role, ATP-dependent specificity component of the Clp protease. It directs the protease to specific substrates. Can perform chaperone functions in the absence of ClpP. Degrades anti-sigma-E factor RseA in the presence of ClpP2. This is ATP-dependent Clp protease ATP-binding subunit ClpC1 (clpC1) from Mycobacterium tuberculosis (strain ATCC 25618 / H37Rv).